We begin with the raw amino-acid sequence, 1074 residues long: Phospholipase D1 (1074 aa).

Positions 81–212 (VKAQVLEVER…TEFLDVSQLS (132 aa)) constitute a PX domain. The region spanning 219–328 (PKGLEGMIMK…WGGAIEEFIQ (110 aa)) is the PH domain. S-palmitoyl cysteine attachment occurs at residues cysteine 240 and cysteine 241. The region spanning 459–486 (YLWAHHEKLVIIDQSVAFVGGIDLAYGR) is the PLD phosphodiesterase 1 domain. The tract at residues 463–928 (HHEKLVIIDQ…MLGKRDSEMA (466 aa)) is catalytic. Phosphoserine is present on residues serine 499, serine 561, and serine 629. Residues 891–918 (ELIYVHSKLLIADDNTVIIGSANINDRS) enclose the PLD phosphodiesterase 2 domain.

It belongs to the phospholipase D family. Interacts with PIP5K1B. Post-translationally, phosphorylated on serine and threonine residues. In terms of processing, it is uncertain whether palmitoylation is on Cys-240 and/or Cys-241. Palmitoylation is required prior to phosphorylation.

Its subcellular location is the cytoplasm. It localises to the perinuclear region. The protein localises to the endoplasmic reticulum membrane. The protein resides in the golgi apparatus membrane. It is found in the late endosome membrane. It catalyses the reaction a 1,2-diacyl-sn-glycero-3-phosphocholine + H2O = a 1,2-diacyl-sn-glycero-3-phosphate + choline + H(+). The enzyme catalyses ethanol + a 1,2-diacyl-sn-glycero-3-phosphocholine = 1,2-diacyl-sn-glycero-3-phosphoethanol + choline. The catalysed reaction is 1,2-dihexadecanoyl-sn-glycero-3-phosphocholine + H2O = 1,2-dihexadecanoyl-sn-glycero-3-phosphate + choline + H(+). Stimulated by phosphatidylinositol 4,5-bisphosphate and phosphatidylinositol 3,4,5-trisphosphate, activated by the phosphokinase C-alpha, by the ADP-ribosylation factor-1 (ARF-1), and to a lesser extent by GTP-binding proteins: RHO A, RAC-1 and CDC42. Inhibited by oleate. Its function is as follows. Function as phospholipase selective for phosphatidylcholine. Implicated as a critical step in numerous cellular pathways, including signal transduction, membrane trafficking, and the regulation of mitosis. May be involved in the regulation of perinuclear intravesicular membrane traffic. The polypeptide is Phospholipase D1 (Rattus norvegicus (Rat)).